The following is a 156-amino-acid chain: ATP synthase subunit b (156 aa).

A helical membrane pass occupies residues 12–32 (VAFLIFVLFCMKFVWPPVIAA).

This sequence belongs to the ATPase B chain family. F-type ATPases have 2 components, F(1) - the catalytic core - and F(0) - the membrane proton channel. F(1) has five subunits: alpha(3), beta(3), gamma(1), delta(1), epsilon(1). F(0) has three main subunits: a(1), b(2) and c(10-14). The alpha and beta chains form an alternating ring which encloses part of the gamma chain. F(1) is attached to F(0) by a central stalk formed by the gamma and epsilon chains, while a peripheral stalk is formed by the delta and b chains.

The protein localises to the cell inner membrane. In terms of biological role, f(1)F(0) ATP synthase produces ATP from ADP in the presence of a proton or sodium gradient. F-type ATPases consist of two structural domains, F(1) containing the extramembraneous catalytic core and F(0) containing the membrane proton channel, linked together by a central stalk and a peripheral stalk. During catalysis, ATP synthesis in the catalytic domain of F(1) is coupled via a rotary mechanism of the central stalk subunits to proton translocation. Its function is as follows. Component of the F(0) channel, it forms part of the peripheral stalk, linking F(1) to F(0). The protein is ATP synthase subunit b of Pseudomonas fluorescens (strain Pf0-1).